The following is a 254-amino-acid chain: Adenosylcobinamide-GDP ribazoletransferase (254 aa).

The next 7 helical transmembrane spans lie at S27–A47, G50–L70, V104–L124, A131–A151, A170–L190, L194–L214, and L233–I253.

Belongs to the CobS family. Requires Mg(2+) as cofactor.

The protein localises to the cell inner membrane. It catalyses the reaction alpha-ribazole + adenosylcob(III)inamide-GDP = adenosylcob(III)alamin + GMP + H(+). It carries out the reaction alpha-ribazole 5'-phosphate + adenosylcob(III)inamide-GDP = adenosylcob(III)alamin 5'-phosphate + GMP + H(+). The protein operates within cofactor biosynthesis; adenosylcobalamin biosynthesis; adenosylcobalamin from cob(II)yrinate a,c-diamide: step 7/7. In terms of biological role, joins adenosylcobinamide-GDP and alpha-ribazole to generate adenosylcobalamin (Ado-cobalamin). Also synthesizes adenosylcobalamin 5'-phosphate from adenosylcobinamide-GDP and alpha-ribazole 5'-phosphate. This chain is Adenosylcobinamide-GDP ribazoletransferase, found in Chlorobaculum tepidum (strain ATCC 49652 / DSM 12025 / NBRC 103806 / TLS) (Chlorobium tepidum).